The chain runs to 419 residues: Isocitrate dehydrogenase [NADP] (419 aa).

Thr102 lines the NADP(+) pocket. D-threo-isocitrate is bound by residues Ser111, Asn113, Arg117, Arg127, and Arg151. Asp306 serves as a coordination point for Mg(2+). Residues 338-344, Asn351, Tyr390, and Arg394 contribute to the NADP(+) site; that span reads HGSAPKY.

The protein belongs to the isocitrate and isopropylmalate dehydrogenases family. As to quaternary structure, homodimer. Mg(2+) is required as a cofactor. Mn(2+) serves as cofactor.

It catalyses the reaction D-threo-isocitrate + NADP(+) = 2-oxoglutarate + CO2 + NADPH. In terms of biological role, catalyzes the oxidative decarboxylation of isocitrate to 2-oxoglutarate and carbon dioxide with the concomitant reduction of NADP(+). This chain is Isocitrate dehydrogenase [NADP], found in Haloferax volcanii (strain ATCC 29605 / DSM 3757 / JCM 8879 / NBRC 14742 / NCIMB 2012 / VKM B-1768 / DS2) (Halobacterium volcanii).